The primary structure comprises 237 residues: DNA repair protein RecO (237 aa).

This sequence belongs to the RecO family.

In terms of biological role, involved in DNA repair and RecF pathway recombination. The chain is DNA repair protein RecO from Rickettsia africae (strain ESF-5).